Reading from the N-terminus, the 160-residue chain is Troponin C, skeletal muscle (160 aa).

Residue Thr2 is modified to N-acetylthreonine. 4 consecutive EF-hand domains span residues 15–50, 51–86, 91–126, and 127–160; these read EMIA…LGQT, PTKE…QMKE, KSEE…SGEH, and VTDE…EGVQ. Positions 28, 30, 34, 39, 64, 66, 68, 70, 75, 104, 106, 108, 110, 115, 140, 142, 144, 146, and 151 each coordinate Ca(2+).

It belongs to the troponin C family.

In terms of biological role, troponin is the central regulatory protein of striated muscle contraction. Tn consists of three components: Tn-I which is the inhibitor of actomyosin ATPase, Tn-T which contains the binding site for tropomyosin and Tn-C. The binding of calcium to Tn-C abolishes the inhibitory action of Tn on actin filaments. The sequence is that of Troponin C, skeletal muscle (TNNC2) from Homo sapiens (Human).